A 100-amino-acid polypeptide reads, in one-letter code: uncharacterized protein (100 aa).

Its subcellular location is the mitochondrion. This is an uncharacterized protein from Arabidopsis thaliana (Mouse-ear cress).